A 146-amino-acid chain; its full sequence is Anti-sigma F factor (146 aa).

This sequence belongs to the anti-sigma-factor family.

It catalyses the reaction L-seryl-[protein] + ATP = O-phospho-L-seryl-[protein] + ADP + H(+). The catalysed reaction is L-threonyl-[protein] + ATP = O-phospho-L-threonyl-[protein] + ADP + H(+). Binds to sigma F and blocks its ability to form an RNA polymerase holoenzyme (E-sigma F). Phosphorylates SpoIIAA on a serine residue. This phosphorylation may enable SpoIIAA to act as an anti-anti-sigma factor that counteracts SpoIIAB and thus releases sigma F from inhibition. In Lysinibacillus sphaericus (Bacillus sphaericus), this protein is Anti-sigma F factor.